Here is a 603-residue protein sequence, read N- to C-terminus: MAKHIVELTDALSNKIAAGEVVERPASVVKELVENAIDAGSTVIDILVEEAGLNKITIIDNGSGIEEEDVATAFLRHATSKIKNEADLFRVHTLGFRGEALPSIASVSHLSMETSTGETKGTTISLEGGKIMEQKSGHARKGTQIEVSQLFFNTPARLKYLKSLPTELGNITDILNRLALAHPDISFRFSHNGKPLLQTNGNGDLRQVIAAIYGVSIARKSIPVKAESLDFNISGYAVLPEVNRSNRNYISTIINGRFIKNFALVKAIQEGYHTLLPIGRFPIIVLQIEMDPIIVDVNVHPAKLEVRLSKEKELGQLISQMIKEAFHQLQLIPDGEVSKKQKEQQKSEQIQMSFEENKLPKETPTLFSKPNVPEYVPSDEDTSREDDFILETLPTYDSKIQPEQAEEPKERIPKMYPIGQMHATYIFAQNENGLYIIDQHAAQERIKYEFYREKIGEVSRELQELLVPIVLEFPTDEYVRLEEQKTKLEEVGVFLENFGQNSFIIRAHPTWFPKNQEEEMLREIIDEALSAPSISIHKLREDTAIMMSCKKSIKANHYLTMQDMEALLDTLREASDPFTCPHGRPVIIQYSTYELEKMFKRVM.

The span at 336–346 shows a compositional bias: basic and acidic residues; the sequence is EVSKKQKEQQK. Disordered stretches follow at residues 336–355 and 361–384; these read EVSK…MSFE and KETP…DTSR.

This sequence belongs to the DNA mismatch repair MutL/HexB family.

Functionally, this protein is involved in the repair of mismatches in DNA. It is required for dam-dependent methyl-directed DNA mismatch repair. May act as a 'molecular matchmaker', a protein that promotes the formation of a stable complex between two or more DNA-binding proteins in an ATP-dependent manner without itself being part of a final effector complex. The polypeptide is DNA mismatch repair protein MutL (Listeria welshimeri serovar 6b (strain ATCC 35897 / DSM 20650 / CCUG 15529 / CIP 8149 / NCTC 11857 / SLCC 5334 / V8)).